We begin with the raw amino-acid sequence, 360 residues long: Peptide chain release factor 1 (360 aa).

Gln237 carries the N5-methylglutamine modification.

It belongs to the prokaryotic/mitochondrial release factor family. In terms of processing, methylated by PrmC. Methylation increases the termination efficiency of RF1.

It is found in the cytoplasm. Functionally, peptide chain release factor 1 directs the termination of translation in response to the peptide chain termination codons UAG and UAA. This Pseudomonas entomophila (strain L48) protein is Peptide chain release factor 1.